Consider the following 465-residue polypeptide: Cytochrome P450 85A1 (465 aa).

Residues 2-22 (GAMMVMMGLLLIIVSLCSALL) traverse the membrane as a helical segment. C415 contacts heme.

This sequence belongs to the cytochrome P450 family. Requires heme as cofactor. Mainly expressed in apical shoots, hypocotyls, siliques and roots. Also present in the female gametophyte.

Its subcellular location is the membrane. The catalysed reaction is 6-deoxoteasterone + reduced [NADPH--hemoprotein reductase] + O2 = 6alpha-hydroxyteasterone + oxidized [NADPH--hemoprotein reductase] + H2O + H(+). It catalyses the reaction 6alpha-hydroxytyphasterol + reduced [NADPH--hemoprotein reductase] + O2 = teasterone + oxidized [NADPH--hemoprotein reductase] + 2 H2O + H(+). The enzyme catalyses 3-dehydro-6-deoxoteasterone + reduced [NADPH--hemoprotein reductase] + O2 = 3-dehydro-6alpha-hydroxyteasterone + oxidized [NADPH--hemoprotein reductase] + H2O + H(+). It carries out the reaction 3-dehydro-6alpha-hydroxyteasterone + reduced [NADPH--hemoprotein reductase] + O2 = 3-dehydroteasterone + oxidized [NADPH--hemoprotein reductase] + 2 H2O + H(+). The catalysed reaction is 6-deoxotyphasterol + reduced [NADPH--hemoprotein reductase] + O2 = 6alpha-hydroxytyphasterol + oxidized [NADPH--hemoprotein reductase] + H2O + H(+). It catalyses the reaction 6alpha-hydroxytyphasterol + reduced [NADPH--hemoprotein reductase] + O2 = typhasterol + oxidized [NADPH--hemoprotein reductase] + 2 H2O + H(+). The enzyme catalyses 6-deoxocastasterone + reduced [NADPH--hemoprotein reductase] + O2 = 6alpha-hydroxycastasterone + oxidized [NADPH--hemoprotein reductase] + H2O + H(+). It carries out the reaction 6alpha-hydroxycastasterone + reduced [NADPH--hemoprotein reductase] + O2 = castasterone + oxidized [NADPH--hemoprotein reductase] + 2 H2O + H(+). The catalysed reaction is 6-deoxocastasterone + 2 reduced [NADPH--hemoprotein reductase] + 2 O2 = castasterone + 2 oxidized [NADPH--hemoprotein reductase] + 3 H2O + 2 H(+). It catalyses the reaction 6-deoxoteasterone + 2 reduced [NADPH--hemoprotein reductase] + 2 O2 = teasterone + 2 oxidized [NADPH--hemoprotein reductase] + 3 H2O + 2 H(+). The enzyme catalyses 6-deoxotyphasterol + 2 reduced [NADPH--hemoprotein reductase] + 2 O2 = typhasterol + 2 oxidized [NADPH--hemoprotein reductase] + 3 H2O + 2 H(+). It carries out the reaction 3-dehydro-6-deoxoteasterone + 2 reduced [NADPH--hemoprotein reductase] + 2 O2 = 3-dehydroteasterone + 2 oxidized [NADPH--hemoprotein reductase] + 3 H2O + 2 H(+). The protein operates within plant hormone biosynthesis; brassinosteroid biosynthesis. Functionally, catalyzes the C6-oxidation step in brassinosteroids biosynthesis. Converts 6-deoxocastasterone (6-deoxoCS) to castasterone (CS). May also convert 6-deoxoteasterone (6-deoxoTE) to teasterone (TE), 3-dehydro-6-deoxoteasterone (6-deoxo3DT, 6-deoxo-3-DHT) to 3-dehydroteasterone (3DT, 3-DHT), and 6-deoxotyphasterol (6-deoxoTY) to typhasterol (TY). Required for the initiation of female gametogenesis (megagametogenesis). The chain is Cytochrome P450 85A1 from Arabidopsis thaliana (Mouse-ear cress).